The sequence spans 144 residues: Large ribosomal subunit protein eL27 (144 aa).

Belongs to the eukaryotic ribosomal protein eL27 family.

It is found in the cytoplasm. In Tetrahymena thermophila, this protein is Large ribosomal subunit protein eL27 (RPL27).